Consider the following 375-residue polypeptide: tRNA-specific 2-thiouridylase MnmA (375 aa).

ATP contacts are provided by residues 9-16 and Leu35; that span reads AMSGGVDS. The Nucleophile role is filled by Cys105. Cys105 and Cys201 form a disulfide bridge. Position 129 (Gly129) interacts with ATP. Positions 151–153 are interaction with tRNA; it reads KNQ. Catalysis depends on Cys201, which acts as the Cysteine persulfide intermediate. The interaction with tRNA stretch occupies residues 307–308; that stretch reads RY.

It belongs to the MnmA/TRMU family.

Its subcellular location is the cytoplasm. It carries out the reaction S-sulfanyl-L-cysteinyl-[protein] + uridine(34) in tRNA + AH2 + ATP = 2-thiouridine(34) in tRNA + L-cysteinyl-[protein] + A + AMP + diphosphate + H(+). Catalyzes the 2-thiolation of uridine at the wobble position (U34) of tRNA, leading to the formation of s(2)U34. This Leptospira interrogans serogroup Icterohaemorrhagiae serovar copenhageni (strain Fiocruz L1-130) protein is tRNA-specific 2-thiouridylase MnmA.